The sequence spans 386 residues: 5-amino-6-(D-ribitylamino)uracil--L-tyrosine 4-hydroxyphenyl transferase (386 aa).

The Radical SAM core domain maps to 56–303 (VSYVINRNLN…MAVARLYLGD (248 aa)). Positions 70, 74, and 77 each coordinate [4Fe-4S] cluster.

The protein belongs to the radical SAM superfamily. CofH family. Consists of two subunits, CofG and CofH. It depends on [4Fe-4S] cluster as a cofactor.

The catalysed reaction is 5-amino-6-(D-ribitylamino)uracil + L-tyrosine + S-adenosyl-L-methionine = 5-amino-5-(4-hydroxybenzyl)-6-(D-ribitylimino)-5,6-dihydrouracil + 2-iminoacetate + 5'-deoxyadenosine + L-methionine + H(+). The protein operates within cofactor biosynthesis; coenzyme F0 biosynthesis. Its function is as follows. Catalyzes the radical-mediated synthesis of 5-amino-5-(4-hydroxybenzyl)-6-(D-ribitylimino)-5,6-dihydrouracil from 5-amino-6-(D-ribitylamino)uracil and L-tyrosine. The chain is 5-amino-6-(D-ribitylamino)uracil--L-tyrosine 4-hydroxyphenyl transferase from Synechococcus elongatus (strain ATCC 33912 / PCC 7942 / FACHB-805) (Anacystis nidulans R2).